A 464-amino-acid chain; its full sequence is ATP synthase subunit beta (464 aa).

153–160 (GGAGVGKT) is a binding site for ATP.

It belongs to the ATPase alpha/beta chains family. As to quaternary structure, F-type ATPases have 2 components, CF(1) - the catalytic core - and CF(0) - the membrane proton channel. CF(1) has five subunits: alpha(3), beta(3), gamma(1), delta(1), epsilon(1). CF(0) has three main subunits: a(1), b(2) and c(9-12). The alpha and beta chains form an alternating ring which encloses part of the gamma chain. CF(1) is attached to CF(0) by a central stalk formed by the gamma and epsilon chains, while a peripheral stalk is formed by the delta and b chains.

It is found in the cell membrane. The enzyme catalyses ATP + H2O + 4 H(+)(in) = ADP + phosphate + 5 H(+)(out). Produces ATP from ADP in the presence of a proton gradient across the membrane. The catalytic sites are hosted primarily by the beta subunits. The chain is ATP synthase subunit beta from Clostridium novyi (strain NT).